The chain runs to 961 residues: Vinculin (961 aa).

2 repeat units span residues 258-362 (ELDN…MGEL) and 371-470 (LGVD…ELKA). The interval 258–470 (ELDNLTVLKK…LTQKLYELKA (213 aa)) is 2 X repeats. The segment at 720–778 (AIAPPQPPPLPTSLPPPIPELSALHLSNQNAERAPPRPPLPREGLAPVRPPPPETDDED) is disordered. Residues 723-738 (PPQPPPLPTSLPPPIP) show a composition bias toward pro residues. T774 is subject to Phosphothreonine.

It belongs to the vinculin/alpha-catenin family. In terms of assembly, exhibits self-association properties.

The protein resides in the cytoplasm. It is found in the cytoskeleton. It localises to the cell junction. The protein localises to the adherens junction. Its subcellular location is the cell membrane. Functionally, involved in cell adhesion. May be involved in the attachment of the actin-based microfilaments to the plasma membrane. The sequence is that of Vinculin (Vinc) from Drosophila melanogaster (Fruit fly).